Here is a 162-residue protein sequence, read N- to C-terminus: NADH-quinone oxidoreductase subunit I (162 aa).

2 4Fe-4S ferredoxin-type domains span residues 52–82 (LRRY…IEAG) and 93–122 (TRYD…EGPN). Residues C62, C65, C68, C72, C102, C105, C108, and C112 each contribute to the [4Fe-4S] cluster site.

This sequence belongs to the complex I 23 kDa subunit family. As to quaternary structure, NDH-1 is composed of 14 different subunits. Subunits NuoA, H, J, K, L, M, N constitute the membrane sector of the complex. The cofactor is [4Fe-4S] cluster.

It is found in the cell inner membrane. The enzyme catalyses a quinone + NADH + 5 H(+)(in) = a quinol + NAD(+) + 4 H(+)(out). In terms of biological role, NDH-1 shuttles electrons from NADH, via FMN and iron-sulfur (Fe-S) centers, to quinones in the respiratory chain. The immediate electron acceptor for the enzyme in this species is believed to be ubiquinone. Couples the redox reaction to proton translocation (for every two electrons transferred, four hydrogen ions are translocated across the cytoplasmic membrane), and thus conserves the redox energy in a proton gradient. This is NADH-quinone oxidoreductase subunit I from Methylobacterium sp. (strain 4-46).